Reading from the N-terminus, the 214-residue chain is Epoxide hydrolase EphH (214 aa).

The active-site Nucleophile is serine 28. Active-site charge relay system residues include aspartate 156 and histidine 186.

The protein belongs to the AB hydrolase superfamily.

It catalyses the reaction an epoxide + H2O = an ethanediol. With respect to regulation, inhibited by AUDA, a known epoxide hydrolase inhibitor. Its function is as follows. Catalyzes the hydrolysis of epoxide-containing substrates. In vitro, catalyzes the hydrolysis of the synthetic compounds PHOME and styrene oxide. Plays an essential role in subverting phagosomal acidification. Plays a major role in the survival of M.tuberculosis (Mtb) during in vitro acidic stress and protects Mtb in response to phagosomal acidification inside macrophages. Also supports Mtb growth under the nutrient-deprived condition at pH 7.0. The chain is Epoxide hydrolase EphH from Mycobacterium tuberculosis (strain ATCC 25618 / H37Rv).